Reading from the N-terminus, the 307-residue chain is Epimerase family protein ML0860 (307 aa).

The protein belongs to the NAD(P)-dependent epimerase/dehydratase family. SDR39U1 subfamily.

The chain is Epimerase family protein ML0860 from Mycobacterium leprae (strain TN).